The sequence spans 933 residues: MTLLGSEHSLLIRSKFRSVLQLRLQQRRTQEQLANEGIIPPLRSPPAFHEQRRRLESDKAADTLKHKVRNRSDRGNVVKMHILQASSAERPVPAAQMKLKRARLADDLNEKIALRPGPLELVEKNILPVDCAVKEAIKGNQVSLSKSADAFAFEEDSSSDGLSPDQTRSEDLPGSAGSPLDTKAAETPLAGPRGTVQDLTLGSENERNDSAPQSGNQSDLGKQGLGPLGSPLPVHAAVKSKSLSDGKNRHKKPKDPKPKVKKLKYHQYIPPDQKAEKSPPPMDSAYARLLQQQQLFLQLQILSQQQQHRFSYPGIHQAQLKEPNEQMARNPNSSSAPLSSTPLSPAKNSFSGQTGVSSLKPGPLPSNLDDLKVSELRQQLRIRGLPVSGTKTALMDRLRPFQDCSGNPVPNFGDITTVTFPVTPSNALPSYQSSPSTSAFYHFGSTSSSPPISPASSDLSVAGSLPDTFNDASPSFGLHPSPVHACAEESLMSSLNGGSLPPELDGLDSEKDKMLVEKQKVINELTWKLQQEQRQVEELRMQLQKQKRGTCPEKKPLPFLAAPIKQEDAGSSCPFAPLPRAVKRQSNSSEEQPAAGDAARLRPLGNTHCAESSGQTNVLSSTFLSPQCSPQHSPFGAVKSPQHISLPPSPNNPYFLPASSGAPGEEHRVSSPVSSQVCTAQMVGLHSSDKAGPKFSNPSPTFSKSASAVSEITQPPSYEDAVKQQMTRSQQMDELLDVLIESGEMPADAREDHSCLQKVPKIPGSSRSPTAALPKPSATFDQASSGGQLAFDHYSNDSDEHLEVLLNSQSPLGKVSEVALLKIGSEEPAFDGMADGFSGKAAEELFNAHEILPGPLSPMHTQFSPSSVDSSGLPLGFTESPWESMEWLDLTPPSSTQGFSSLSTGGPSIFNIDFLDVTDLNLNSPMDLHLQQW.

The MEF2C-binding motif lies at 12-27; the sequence is IRSKFRSVLQLRLQQR. 3 RPEL repeats span residues 18-43, 62-87, and 106-131; these read SVLQLRLQQRRTQEQLANEGIIPPLR, DTLKHKVRNRSDRGNVVKMHILQASS, and DDLNEKIALRPGPLELVEKNILPVDC. The tract at residues 153 to 205 is HDAC5-binding; that stretch reads FEEDSSSDGLSPDQTRSEDLPGSAGSPLDTKAAETPLAGPRGTVQDLTLGSEN. Disordered regions lie at residues 154–282 and 324–365; these read EEDS…PPPM and NEQM…GPLP. Over residues 210–220 the composition is skewed to polar residues; the sequence is SAPQSGNQSDL. Over residues 248–265 the composition is skewed to basic residues; the sequence is NRHKKPKDPKPKVKKLKY. The segment covering 330 to 346 has biased composition (low complexity); sequence NPNSSSAPLSSTPLSPA. Positions 347–357 are enriched in polar residues; sequence KNSFSGQTGVS. The 35-residue stretch at 368 to 402 folds into the SAP domain; it reads LDDLKVSELRQQLRIRGLPVSGTKTALMDRLRPFQ. Phosphoserine; by GSK3-beta occurs at positions 445, 449, 453, and 457. Residues 515–550 are a coiled coil; sequence LVEKQKVINELTWKLQQEQRQVEELRMQLQKQKRGT. The tract at residues 568–613 is disordered; sequence DAGSSCPFAPLPRAVKRQSNSSEEQPAAGDAARLRPLGNTHCAESS. Residues Ser621, Ser625, Ser629, and Ser633 each carry the phosphoserine; by GSK3-beta modification. 2 disordered regions span residues 630–672 and 760–794; these read PQHS…VSSP and PKIPGSSRSPTAALPKPSATFDQASSGGQLAFDHY. Residues 712 to 933 form a required for interaction with and ubiquitination by STUB1 region; it reads ITQPPSYEDA…SPMDLHLQQW (222 aa). Residues Ser810, Ser857, and Ser864 each carry the phosphoserine; by MAPK1 and MAPK3 modification. Thr891 carries the phosphothreonine; by MAPK1 and MAPK3 modification.

As to quaternary structure, homodimer. Interacts with MLLT7/FOXO4. Interacts with SRF, its association does not depend on specific DNA sequences for ternary complex formation. Interacts (via C-terminal) with EP300 (via the CREB-binding domain). Interacts with HDAC4 and HDAC5. Interacts with MEF2C. Interacts (via C-terminus) with STUB1/CHIP. Interacts with PURB. Ubiquitinated; by STUB1/CHIP at the C-terminus, leading to its degradation by the proteasome. Phosphorylation by GSK3B is required for STUB1/CHIP-mediated ubiquitination. Post-translationally, phosphorylation negatively regulates the intrinsic myocardin transcriptional activity. Phosphorylated; by GSK3B. As to expression, expressed in the heart and in smooth muscle cells-containing tissues (aorta, pulmonary vein, lung), but is not detectable in skeletal muscle, liver, kidney and spleen.

The protein localises to the nucleus. Its function is as follows. Smooth muscle cells (SM) and cardiac muscle cells-specific transcriptional factor which uses the canonical single or multiple CArG boxes DNA sequence. Acts as a cofactor of serum response factor (SRF) with the potential to modulate SRF-target genes. Plays a crucial role in cardiogenesis, urinary bladder development, and differentiation of the smooth muscle cell lineage (myogenesis). Positively regulates the transcription of genes involved in vascular smooth muscle contraction. The chain is Myocardin (MYOCD) from Sus scrofa (Pig).